Reading from the N-terminus, the 117-residue chain is Holo-[acyl-carrier-protein] synthase (117 aa).

Asp-8 and Glu-58 together coordinate Mg(2+).

The protein belongs to the P-Pant transferase superfamily. AcpS family. Mg(2+) is required as a cofactor.

It localises to the cytoplasm. The catalysed reaction is apo-[ACP] + CoA = holo-[ACP] + adenosine 3',5'-bisphosphate + H(+). Its function is as follows. Transfers the 4'-phosphopantetheine moiety from coenzyme A to a Ser of acyl-carrier-protein. This is Holo-[acyl-carrier-protein] synthase from Staphylococcus epidermidis (strain ATCC 35984 / DSM 28319 / BCRC 17069 / CCUG 31568 / BM 3577 / RP62A).